A 1198-amino-acid chain; its full sequence is Fibronectin type-III domain-containing protein 3A (1198 aa).

The segment covering lysine 188–methionine 201 has biased composition (basic and acidic residues). The tract at residues lysine 188–glutamate 257 is disordered. Serine 203, serine 207, and serine 213 each carry phosphoserine. Fibronectin type-III domains lie at asparagine 268 to cysteine 369, proline 373 to cysteine 465, valine 469 to aspartate 562, valine 566 to valine 660, proline 664 to glycine 757, glutamine 761 to serine 851, serine 863 to leucine 950, proline 951 to serine 1045, and alanine 1049 to proline 1151. N6-acetyllysine is present on lysine 384. Residues isoleucine 1177–isoleucine 1197 form a helical membrane-spanning segment.

This sequence belongs to the FNDC3 family. In terms of tissue distribution, testis. Localizes to the acrosome of spermatids, as well as to Leydig cells. Can be detected on the acrosome beginning at steps 2-3 and continuing until step 12 of spermiogenesis.

It is found in the golgi apparatus membrane. Functionally, mediates spermatid-Sertoli adhesion during spermatogenesis. This chain is Fibronectin type-III domain-containing protein 3A (Fndc3a), found in Mus musculus (Mouse).